Consider the following 364-residue polypeptide: MGSTGETQMSPAQILDEEANFAMQLISSSVLPMVLKTAIELDLLEIMAKAGPGALLSPSDIASHLPTKNPDAPVMLDRILRLLASYSILICSLRDLPDGKVERLYGLASVCKFLTKNEDGVSVSPLCLMNQDKVLMESWYHLKDAILEGGIPFNKAYGMTAFEYHGTDPRFNKVFNKGMSDHSKMAMKKILESYKGFEGLASLVDVGGGTGAVVSTIVSKYPSIKGINFDLPHVIADAPAFPGVENVGGDMFVSVPKADAVFMKWICHDWSDEHCLRLLKNCYDALPENGKVILVECILPVAPDTSLATKGVMHVDAIMLAHNPGGKERTDKEFEGLARGAGFKGFEVMCCAFNTHVIEFRKQA.

129 to 135 contacts substrate; it reads MNQDKVL. A substrate binding region spans residues 161-179; it reads AFEYHGTDPRFNKVFNKGM. S-adenosyl-L-methionine contacts are provided by G207, D230, D250, M251, and K264. The active-site Proton acceptor is the H268.

This sequence belongs to the class I-like SAM-binding methyltransferase superfamily. Cation-independent O-methyltransferase family. COMT subfamily. As to quaternary structure, homodimer.

It catalyses the reaction (E)-caffeate + S-adenosyl-L-methionine = (E)-ferulate + S-adenosyl-L-homocysteine + H(+). It participates in aromatic compound metabolism; phenylpropanoid biosynthesis. In terms of biological role, catalyzes the conversion of caffeic acid to ferulic acid and of 5-hydroxyferulic acid to sinapic acid. The resulting products may subsequently be converted to the corresponding alcohols that are incorporated into lignins. The polypeptide is Caffeic acid 3-O-methyltransferase 3 (HOMT3) (Populus kitakamiensis (Aspen)).